A 117-amino-acid chain; its full sequence is Minor capsid protein p17 (117 aa).

N-linked (GlcNAc...) asparagine; by host glycosylation is present at Asn-12. A helical transmembrane segment spans residues 39–59 (AIILGILILLVIILIVVAIVY). N-linked (GlcNAc...) asparagine; by host glycans are attached at residues Asn-61 and Asn-98. Positions 97-117 (KNSTTQQHIPSDEQLAELAHS) are disordered.

Belongs to the asfivirus minor capsid protein p17 family. In terms of assembly, interacts with the minor capsid protein M1249L and with the hexon capsid protein p72 capsomers; these interactions form a rigid zipper structure that stabilizes the capsomers. Interacts with host STING1.

The protein resides in the virion membrane. Its subcellular location is the host endoplasmic reticulum membrane. Together with the penton and the other minor capsid proteins (M1249L, p49), forms a complicated network immediately below the outer capsid shell, stabilizing the whole capsid. Three copies of p17 encircle each p72 capsomer in the inner capsid shell, anchoring p72 capsomers on the inner membrane. Required for the assembly of the capsid and icosahedral morphogenesis. Additionally, inhibits the host cGAS-STING pathway through its interaction with STING1 and subsequent interference of the recruitment of downstream components TBK1 and IKBKE. The polypeptide is Minor capsid protein p17 (Ornithodoros (relapsing fever ticks)).